The primary structure comprises 276 residues: Ribosomal RNA small subunit methyltransferase A (276 aa).

S-adenosyl-L-methionine is bound by residues Asn-27, Leu-29, Gly-54, Glu-75, Asp-101, and Asn-123.

The protein belongs to the class I-like SAM-binding methyltransferase superfamily. rRNA adenine N(6)-methyltransferase family. RsmA subfamily.

The protein localises to the cytoplasm. It carries out the reaction adenosine(1518)/adenosine(1519) in 16S rRNA + 4 S-adenosyl-L-methionine = N(6)-dimethyladenosine(1518)/N(6)-dimethyladenosine(1519) in 16S rRNA + 4 S-adenosyl-L-homocysteine + 4 H(+). Functionally, specifically dimethylates two adjacent adenosines (A1518 and A1519) in the loop of a conserved hairpin near the 3'-end of 16S rRNA in the 30S particle. May play a critical role in biogenesis of 30S subunits. In Bartonella bacilliformis (strain ATCC 35685 / KC583 / Herrer 020/F12,63), this protein is Ribosomal RNA small subunit methyltransferase A.